Here is a 305-residue protein sequence, read N- to C-terminus: E3 ubiquitin-protein ligase RNF115 (305 aa).

N-acetylalanine is present on Ala-2. Residues Asn-100–His-110 are compositionally biased toward basic and acidic residues. A disordered region spans residues Asn-100–Ser-139. Ser-133 is subject to Phosphoserine. Residues Cys-229–Arg-270 form an RING-type zinc finger. The tract at residues Asn-274–Phe-305 is disordered. A compositionally biased stretch (polar residues) spans Arg-280–Ser-297.

As to quaternary structure, interacts with RAB7A. Interacts with EGFR and FLT3. Interacts with BST2. Interacts with STX17. Interacts with YWHAE. Phosphorylated by AKT1, allowing association with the 14-3-3 chaperones that facilitates associating with TLRs. In terms of processing, deubiquitinated by USP9X; antogonizing its autoubiquitination and subsequent proteasomal degradation. Post-translationally, RING-type zinc finger-dependent and E2-dependent autoubiquitination.

The protein localises to the cytoplasm. It is found in the cytoplasmic vesicle. It localises to the phagosome. The protein resides in the nucleus. Its subcellular location is the endoplasmic reticulum. The protein localises to the golgi apparatus. The enzyme catalyses S-ubiquitinyl-[E2 ubiquitin-conjugating enzyme]-L-cysteine + [acceptor protein]-L-lysine = [E2 ubiquitin-conjugating enzyme]-L-cysteine + N(6)-ubiquitinyl-[acceptor protein]-L-lysine.. It participates in protein modification; protein ubiquitination. Functionally, E3 ubiquitin-protein ligase that catalyzes the 'Lys-48'- and/or 'Lys-63'-linked polyubiquitination of various substrates and thereby plays a role in a number of signaling pathways including autophagy, innate immunity, cell proliferation and cell death. Plays a role in the endosomal trafficking and degradation of membrane receptors including EGFR, FLT3, MET and CXCR4 through their polyubiquitination. Participates together with BST2 in antiviral immunity by facilitating the internalization of HIV-1 virions into intracellular vesicles leading to their lysosomal degradation. Also possesses an antiviral activity independently of BST2 by promoting retroviral GAG proteins ubiquitination, redistribution to endo-lysosomal compartments and, ultimately, lysosomal degradation. Catalyzes distinct types of ubiquitination on MAVS and STING1 at different phases of viral infection to promote innate antiviral response. Mediates the 'Lys-48'-linked ubiquitination of MAVS leading to its proteasomal degradation and ubiquitinates STING1 via 'Lys-63'-linked polyubiquitination, critical for its oligomerization and the subsequent recruitment of TBK1. Plays a positive role in the autophagosome-lysosome fusion by interacting with STX17 and enhancing its stability without affecting 'Lys-48'- or 'Lys-63'-linked polyubiquitination levels, which in turn promotes autophagosome maturation. Negatively regulates TLR-induced expression of proinflammatory cytokines by catalyzing 'Lys-11'-linked ubiquitination of RAB1A and RAB13 to inhibit post-ER trafficking of TLRs to the Golgi by RAB1A and subsequently from the Golgi apparatus to the cell surface by RAB13. In Mus musculus (Mouse), this protein is E3 ubiquitin-protein ligase RNF115.